Consider the following 383-residue polypeptide: Deoxyuridylate hydroxymethyltransferase (383 aa).

Residue cysteine 162 is part of the active site.

It belongs to the thymidylate synthase family. As to quaternary structure, homodimer.

It catalyses the reaction dUMP + (6R)-5,10-methylene-5,6,7,8-tetrahydrofolate + H2O = 5-hydroxymethyl-dUMP + (6S)-5,6,7,8-tetrahydrofolate. Functionally, catalyzes formation of 5-hydroxymethyldeoxyuridylate (5HMdUMP) as a step in the pathway that replaces dTMP by thymidine hypermodifications in the viral genome. As a final result of the pathway of hypermodification, hydroxymethyluracil substitutes for a subset of thymidines in the viral DNA. These modifications probably prevent degradation of viral DNA by the host restriction-modification antiviral defense system. This chain is Deoxyuridylate hydroxymethyltransferase, found in Bacillus subtilis (Bacteriophage SP01).